Here is a 423-residue protein sequence, read N- to C-terminus: Mannan endo-1,4-beta-mannosidase (423 aa).

Residues 1-27 (MKTITTARLPWAAQSFALGICLIALLG) form the signal peptide. Residues 56–409 (METRSLFAFM…YADEFTAFNR (354 aa)) enclose the GH26 domain. Residues E121, H143, and W162 each coordinate substrate. The active-site Proton donor is E212. The substrate site is built by W217 and Y285. E320 (nucleophile) is an active-site residue. Residues 360 to 361 (WR) and H377 each bind substrate.

It belongs to the glycosyl hydrolase 26 family. Homodimer.

It carries out the reaction Random hydrolysis of (1-&gt;4)-beta-D-mannosidic linkages in mannans, galactomannans and glucomannans.. In terms of biological role, catalyzes the endo hydrolysis of beta-1,4-linked mannan and galactomannan, but displays little activity towards other polysaccharides located in the plant cell wall. Preferentially hydrolyzes the larger oligosaccharides and has greater activity against non-substituted polysaccharides. It displays tight specificity for mannose at both the -2 and the -1 subsites. Appears to act in synergy with alpha-galactosidase (AgaA) to elicit hydrolysis of galactomannan. The polypeptide is Mannan endo-1,4-beta-mannosidase (Cellvibrio japonicus (strain Ueda107) (Pseudomonas fluorescens subsp. cellulosa)).